We begin with the raw amino-acid sequence, 266 residues long: Regulatory protein RecX (266 aa).

Belongs to the RecX family.

The protein localises to the cytoplasm. Functionally, modulates RecA activity. The chain is Regulatory protein RecX from Enterococcus faecalis (strain ATCC 700802 / V583).